The sequence spans 429 residues: D-amino acid dehydrogenase 1 (429 aa).

3-17 contributes to the FAD binding site; that stretch reads VLVLGSGVIGVTSAY.

It belongs to the DadA oxidoreductase family. FAD serves as cofactor.

The catalysed reaction is a D-alpha-amino acid + A + H2O = a 2-oxocarboxylate + AH2 + NH4(+). In terms of biological role, oxidative deamination of D-amino acids. In Ralstonia nicotianae (strain ATCC BAA-1114 / GMI1000) (Ralstonia solanacearum), this protein is D-amino acid dehydrogenase 1 (dadA1).